We begin with the raw amino-acid sequence, 387 residues long: MNLHEYQAKALLQRYGVNVPRSQVAETAQAAVEAARALEGDAWVVKAQVHAGGRGKAGGVKLVRTLDEVQDIAVSLLGKRLVTYQNAPDGQPVEKVLVEATLPIARELYVSMLVDRSLERVVLVASAAGGMEIEEIAKDSPEKILQEVCDPLNGLVDYQARNIAFALGLVGDQVAAFTRLAKGLYRLFKENDLALLEINPLIVTAEGALVALDCKMSVDDNALYRRRELAEQRDWSQDDAKEAEAHNAGLNYIALNGNIGCMVNGAGLAMATMDLIKLHGGAPANFLDVGGGATATTVARAFKIILADPNVKAILVNIFGGIMRCDIIAEGIITAVKEVGIEIPVVVRLEGTNVELGRKMLSESGLSIISAAGLTDAAQQAVAAVKV.

The region spanning 9 to 244 is the ATP-grasp domain; sequence KALLQRYGVN…WSQDDAKEAE (236 aa). Residues Lys-46, 53-55, Glu-99, Leu-102, and Glu-107 each bind ATP; that span reads GRG. Residues Asn-199 and Asp-213 each contribute to the Mg(2+) site. Residues Asn-264 and 321-323 each bind substrate; that span reads GIM.

Belongs to the succinate/malate CoA ligase beta subunit family. Heterotetramer of two alpha and two beta subunits. Mg(2+) is required as a cofactor.

It catalyses the reaction succinate + ATP + CoA = succinyl-CoA + ADP + phosphate. It carries out the reaction GTP + succinate + CoA = succinyl-CoA + GDP + phosphate. It participates in carbohydrate metabolism; tricarboxylic acid cycle; succinate from succinyl-CoA (ligase route): step 1/1. Functionally, succinyl-CoA synthetase functions in the citric acid cycle (TCA), coupling the hydrolysis of succinyl-CoA to the synthesis of either ATP or GTP and thus represents the only step of substrate-level phosphorylation in the TCA. The beta subunit provides nucleotide specificity of the enzyme and binds the substrate succinate, while the binding sites for coenzyme A and phosphate are found in the alpha subunit. The sequence is that of Succinate--CoA ligase [ADP-forming] subunit beta from Methylobacillus flagellatus (strain ATCC 51484 / DSM 6875 / VKM B-1610 / KT).